We begin with the raw amino-acid sequence, 90 residues long: Small ribosomal subunit protein uS15c (90 aa).

The protein belongs to the universal ribosomal protein uS15 family. Part of the 30S ribosomal subunit.

Its subcellular location is the plastid. The protein localises to the chloroplast. This is Small ribosomal subunit protein uS15c (rps15) from Acorus calamus (Sweet flag).